A 151-amino-acid chain; its full sequence is Caveolin-3 (151 aa).

The Cytoplasmic portion of the chain corresponds to 1-83; sequence MMAEEHTDLE…RLLSTLLGVP (83 aa). Lys-38 is covalently cross-linked (Glycyl lysine isopeptide (Lys-Gly) (interchain with G-Cter in SUMO3)). Residues 64 to 114 are required for interaction with DAG1; the sequence is TFTVSKYWCYRLLSTLLGVPLALLWGFLFACISFCHIWAVVPCIKSYLIEI. Positions 84–104 form an intramembrane region, helical; the sequence is LALLWGFLFACISFCHIWAVV. Topologically, residues 105–151 are cytoplasmic; that stretch reads PCIKSYLIEIQCISHIYSLCIRTFCNPLFAALGQVCSSIKVVLRKEV.

Belongs to the caveolin family. As to quaternary structure, homooligomer. Interacts with DLG1 and KCNA5; forms a ternary complex. Interacts with TRIM72. Interacts with MUSK; may regulate MUSK signaling. Interacts with DAG1 (via its C-terminal); the interaction prevents binding of DAG1 with DMD. Interacts with DYSF. Interacts with POPDC1. Interacts with CAVIN1 and CAVIN2. Interacts with CAVIN4. Sumoylation with SUMO3 by PIAS4 may reduce agonist-induced internalization and desensitization of adrenergic receptor ABRD2. In terms of tissue distribution, expressed predominantly in muscle.

The protein resides in the golgi apparatus membrane. It localises to the cell membrane. The protein localises to the membrane. Its subcellular location is the caveola. It is found in the sarcolemma. Functionally, may act as a scaffolding protein within caveolar membranes. Interacts directly with G-protein alpha subunits and can functionally regulate their activity. May also regulate voltage-gated potassium channels. Plays a role in the sarcolemma repair mechanism of both skeletal muscle and cardiomyocytes that permits rapid resealing of membranes disrupted by mechanical stress. Mediates the recruitment of CAVIN2 and CAVIN3 proteins to the caveolae. This chain is Caveolin-3 (CAV3), found in Homo sapiens (Human).